Consider the following 313-residue polypeptide: Ribosomal RNA small subunit methyltransferase H (313 aa).

S-adenosyl-L-methionine contacts are provided by residues 35–37, Asp-55, Phe-79, Asp-100, and Gln-107; that span reads GGH.

Belongs to the methyltransferase superfamily. RsmH family.

The protein localises to the cytoplasm. The catalysed reaction is cytidine(1402) in 16S rRNA + S-adenosyl-L-methionine = N(4)-methylcytidine(1402) in 16S rRNA + S-adenosyl-L-homocysteine + H(+). Specifically methylates the N4 position of cytidine in position 1402 (C1402) of 16S rRNA. The polypeptide is Ribosomal RNA small subunit methyltransferase H (Burkholderia pseudomallei (strain 1106a)).